We begin with the raw amino-acid sequence, 276 residues long: Ribosomal RNA small subunit methyltransferase A (276 aa).

S-adenosyl-L-methionine-binding residues include N27, L29, G54, E75, D101, and N123.

It belongs to the class I-like SAM-binding methyltransferase superfamily. rRNA adenine N(6)-methyltransferase family. RsmA subfamily.

It localises to the cytoplasm. It carries out the reaction adenosine(1518)/adenosine(1519) in 16S rRNA + 4 S-adenosyl-L-methionine = N(6)-dimethyladenosine(1518)/N(6)-dimethyladenosine(1519) in 16S rRNA + 4 S-adenosyl-L-homocysteine + 4 H(+). Functionally, specifically dimethylates two adjacent adenosines (A1518 and A1519) in the loop of a conserved hairpin near the 3'-end of 16S rRNA in the 30S particle. May play a critical role in biogenesis of 30S subunits. This chain is Ribosomal RNA small subunit methyltransferase A, found in Bartonella quintana (strain Toulouse) (Rochalimaea quintana).